The following is a 461-amino-acid chain: Serine/threonine-protein kinase 4 homolog A (461 aa).

Residues 20 to 273 (FTIVEKLGEG…AEELLKHPFI (254 aa)) enclose the Protein kinase domain. Residues 26-34 (LGEGSYGSV) and Lys49 each bind ATP. The active-site Proton acceptor is Asp139. Thr173 is modified (phosphothreonine; by autocatalysis). Disordered regions lie at residues 303-349 (GIEQ…EEYD) and 369-388 (NDDE…SNKK). The span at 307–322 (RDEEEEDEDEDSEDSD) shows a compositional bias: acidic residues. Residues 411–458 (SDKYSSYSLEELKKMLAELEIEREKEVQKTLEKFSINRQALLAVIDEK) enclose the SARAH domain.

It belongs to the protein kinase superfamily. STE Ser/Thr protein kinase family. STE20 subfamily. Requires Mn(2+) as cofactor. Post-translationally, undergoes autophosphorylation in the catalytic domain.

It is found in the cytoplasm. The protein resides in the cytosol. The enzyme catalyses L-seryl-[protein] + ATP = O-phospho-L-seryl-[protein] + ADP + H(+). It carries out the reaction L-threonyl-[protein] + ATP = O-phospho-L-threonyl-[protein] + ADP + H(+). Functionally, regulates both cAMP signaling during early development and the stress response. Functions as an activator of adenylylcyclase. The protein is Serine/threonine-protein kinase 4 homolog A (krsA) of Dictyostelium discoideum (Social amoeba).